The primary structure comprises 306 residues: Erythromycin 3''-O-methyltransferase (306 aa).

S-adenosyl-L-methionine contacts are provided by L157 and H162.

It belongs to the methyltransferase superfamily.

The catalysed reaction is erythromycin C + S-adenosyl-L-methionine = erythromycin A + S-adenosyl-L-homocysteine + H(+). It catalyses the reaction erythromycin D + S-adenosyl-L-methionine = erythromycin B + S-adenosyl-L-homocysteine + H(+). It functions in the pathway antibiotic biosynthesis; erythromycin biosynthesis. Its function is as follows. S-adenosyl-L-methionine-dependent O-methyltransferase that catalyzes the last step in the erythromycin biosynthesis pathway. Methylates the position 3 of the mycarosyl moiety of erythromycin C, forming the most active form of the antibiotic, erythromycin A. Can also methylate the precursor erythromycin D, forming erythromycin B. In Saccharopolyspora erythraea (strain ATCC 11635 / DSM 40517 / JCM 4748 / NBRC 13426 / NCIMB 8594 / NRRL 2338), this protein is Erythromycin 3''-O-methyltransferase (eryG).